A 368-amino-acid chain; its full sequence is MAPKKAEEVVESPPVSSEEEESGSSGEESESSAEVPKKVESSQKPESDSEGESESESSSGPEPESEPAKTIKLKPVGTKPIPETSGSAATVPESSTAKRPLKEAAPEAIKKQKTSDTEHVKKPITNDEVKKISSEDAKKMFQRLFSETDEIALLQGIIDFTSTKGDPYEDIDAFCIYVKKLIDFDATKNQIVTKLQRLKKKFNNAVKNSLKKGKTEDDIEFAKDLEQKGFELSRKIWGSNGVLVTGKSSRKKVGGTPAPKEMKLVAHSTPKKQQEEAKKPERTEAKVVNTGLSIGKEIASFLNADNGSSCGLDESTLTAVWAKVADGAEKREVEEKWKKLKAKQFELCLQRSGLVNETAKMIFKAYES.

The interval 1 to 123 (MAPKKAEEVV…TSDTEHVKKP (123 aa)) is disordered. Residues 17-31 (SEEEESGSSGEESES) show a composition bias toward acidic residues. Over residues 35-47 (VPKKVESSQKPES) the composition is skewed to basic and acidic residues. The span at 84–97 (TSGSAATVPESSTA) shows a compositional bias: polar residues. The span at 100–123 (PLKEAAPEAIKKQKTSDTEHVKKP) shows a compositional bias: basic and acidic residues.

This sequence belongs to the GeBP family. Mono-, di- and oligomers. Associated with the Mediator complex. Interacts with MED6. Interacts with MED10A, MED28 and MED32. Interacts with DEK3.

The protein localises to the nucleus. In terms of biological role, transcription factor that binds promoters containing the CryR2 element, 5'-ACATAWCT-3'. The DNA-binding activity is decreased upon direct physical interaction with the mediator subunits and is modulated by redox conditions. The oxidized protein is the preferential binding form. This chain is GLABROUS1 enhancer-binding protein-like, found in Arabidopsis thaliana (Mouse-ear cress).